The primary structure comprises 3767 residues: Transmembrane cell adhesion receptor mua-3 (3767 aa).

An N-terminal signal peptide occupies residues 1 to 24 (MQAGISIFFLFLHIPIFFVNCSNS). Residues 25 to 3417 (TSCVAREEFQ…CQVAPSNASL (3393 aa)) lie on the Extracellular side of the membrane. The LDL-receptor class A 1 domain maps to 26 to 63 (SCVAREEFQCKMDDSCISMKKWQDGVDDCYDGSDEVCL). 10 disulfides stabilise this stretch: C27–C41, C35–C54, C62–C76, C69–C89, C97–C110, C104–C123, C131–C144, C138–C157, C165–C179, and C172–C192. 3 consecutive LDL-receptor class A domains span residues 96 to 132 (GCPA…EPCA), 133 to 166 (QNQF…EECT), and 167 to 209 (TSQF…ANCT). 2 N-linked (GlcNAc...) asparagine glycosylation sites follow: N201 and N207. 17 consecutive EGF-like domains span residues 225 to 268 (KLKF…DKCI), 375 to 416 (NRDD…GTCR), 418 to 466 (LIDE…RKCR), 468 to 517 (LINE…RNCT), 519 to 566 (AINE…RKCV), 614 to 663 (RANP…RKCV), 665 to 713 (AVDE…RSCK), 714 to 760 (KADM…RVCR), 762 to 810 (VVNE…KNCV), 816 to 860 (DPPE…GRCV), 861 to 908 (VINE…RICR), 910 to 961 (RVNE…RRCI), 963 to 1012 (AVNE…RICT), 1029 to 1070 (TDDG…GSCR), 1071 to 1118 (VYSA…RICK), 1120 to 1168 (LINE…RQCT), and 1170 to 1219 (SNNE…RVCT). 51 disulfides stabilise this stretch: C229-C243, C235-C252, C254-C267, C381-C392, C386-C402, C404-C415, C422-C435, C429-C444, C446-C465, C472-C486, C480-C495, C497-C516, C523-C536, C530-C545, C547-C565, C618-C632, C626-C642, C644-C662, C669-C682, C676-C691, C693-C712, C718-C729, C723-C738, C740-C759, C766-C779, C773-C788, C790-C809, C820-C836, C828-C845, C847-C859, C865-C879, C873-C888, C890-C907, C914-C930, C924-C939, C941-C960, C967-C981, C975-C990, C992-C1011, C1033-C1046, C1040-C1055, C1057-C1069, C1075-C1087, C1081-C1096, C1098-C1117, C1124-C1137, C1131-C1146, C1148-C1167, C1174-C1188, C1182-C1197, and C1199-C1218. N383 carries an N-linked (GlcNAc...) asparagine glycan. N515 is a glycosylation site (N-linked (GlcNAc...) asparagine). Residues 1230–1406 (DLVFLIDGSG…DLDTRLRSMI (177 aa)) enclose the VWFA domain. N1350 carries N-linked (GlcNAc...) asparagine glycosylation. EGF-like domains lie at 1421–1466 (SEDV…RVCG), 1466–1510 (GGDL…GFCV), 1521–1562 (HDAN…GQCA), 1563–1608 (YPGS…DICL), 1608–1656 (LKNE…RVCV), 1658–1706 (LQNE…MVCK), 1708–1755 (LVNE…RRCE), 1759–1807 (TNDK…RLCI), 1809–1860 (VIPE…RLCK), 1862–1911 (LQNE…RKCK), 1913–1961 (LINE…RRCL), 1963–2011 (RINE…RICR), 2014–2062 (LVDE…RLCQ), 2068–2112 (PPPE…GSCS), 2113–2160 (IINE…RMCK), 2162–2208 (MVNE…RICK), 2210–2258 (LTNE…RACR), 2260–2308 (LVNE…RVCL), 2310–2358 (FINE…RVCV), 2360–2408 (LVDE…RVCS), 2409–2455 (APEV…RVCV), 2456–2504 (RNNA…RVCE), 2513–2563 (PRHP…RLCV), 2565–2616 (TEPV…RICK), 2618–2666 (LINE…RICS), 2668–2714 (SVNE…HRCS), 2716–2763 (MINE…RICR), 2763–2811 (RLNE…RICI), and 2833–2872 (REFP…GKCQ). 66 disulfides stabilise this stretch: C1425-C1441, C1433-C1450, C1452-C1465, C1470-C1484, C1478-C1494, C1496-C1509, C1525-C1538, C1532-C1547, C1549-C1561, C1567-C1583, C1575-C1592, C1594-C1607, C1612-C1625, C1619-C1634, C1636-C1655, C1662-C1675, C1669-C1684, C1686-C1705, C1712-C1726, C1720-C1735, C1737-C1754, C1763-C1776, C1770-C1786, C1788-C1806, C1813-C1829, C1821-C1838, C1840-C1859, C1866-C1880, C1873-C1889, C1891-C1910, C1917-C1930, C1924-C1939, C1941-C1960, C1967-C1980, C1974-C1989, C1991-C2010, C2018-C2031, C2025-C2040, C2042-C2061, C2072-C2088, C2080-C2097, C2099-C2111, C2117-C2131, C2125-C2140, C2142-C2159, C2166-C2180, C2174-C2189, C2191-C2207, C2214-C2228, C2222-C2237, C2239-C2257, C2264-C2278, C2272-C2287, C2289-C2307, C2314-C2327, C2321-C2336, C2338-C2357, C2364-C2377, C2371-C2386, C2388-C2407, C2413-C2425, C2419-C2435, C2437-C2454, C2460-C2474, C2468-C2483, and C2485-C2503. The segment at 2492 to 2521 (RSPDSSQRGRVCEPPPPPSPPPRHPCQDPE) is disordered. Residues 2504–2515 (EPPPPPSPPPRH) show a composition bias toward pro residues. Intrachain disulfides connect C2517-C2531, C2525-C2541, C2543-C2562, C2569-C2583, C2577-C2594, C2596-C2615, C2622-C2636, C2630-C2645, C2647-C2665, C2672-C2686, C2680-C2695, C2697-C2713, C2720-C2734, C2728-C2743, C2745-C2762, C2767-C2781, C2775-C2790, C2792-C2810, C2837-C2850, C2842-C2856, and C2858-C2871. Residues 2873–2999 (EVQETPFELR…GSLRVASDTD (127 aa)) form the SEA 1 domain. The N-linked (GlcNAc...) asparagine glycan is linked to N2944. The region spanning 3009 to 3048 (EWGNCGGMSCKEHLKEVCIAGHICGCPDGMKRRDANSECR) is the EGF-like 47 domain. Cystine bridges form between C3013–C3026, C3018–C3032, and C3034–C3047. In terms of domain architecture, SEA 2 spans 3049–3174 (VVESWNVPLW…SELYLNPTQP (126 aa)). Residues N3120 and N3130 are each glycosylated (N-linked (GlcNAc...) asparagine). 3 EGF-like domains span residues 3176–3220 (PFNP…KKCL), 3224–3272 (GFNE…SLCV), and 3272–3324 (VLDY…TLCM). Disulfide bonds link C3180-C3191, C3185-C3201, C3203-C3219, C3228-C3242, C3236-C3251, C3253-C3271, C3276-C3288, C3282-C3297, C3299-C3323, C3332-C3345, C3339-C3354, C3356-C3372, C3377-C3386, C3380-C3397, and C3399-C3408. A glycan (N-linked (GlcNAc...) asparagine) is linked at N3285. The EGF-like 51; calcium-binding domain maps to 3328–3373 (DVDECALGLNNCSGVAHCIDRAVGYTCKCPDGYIDGNPDEPGRVCG). Residue N3337 is glycosylated (N-linked (GlcNAc...) asparagine; atypical). N3338 is a glycosylation site (N-linked (GlcNAc...) asparagine). Positions 3373-3409 (GALLCDLCNAHGDCVHNTATNNITCVCTDGWTGPQCQ) constitute an EGF-like 52 domain. An N-linked (GlcNAc...) asparagine glycan is attached at N3394. N-linked (GlcNAc...) asparagine glycosylation is present at N3414. Residues 3418-3438 (VLLILLALLFLLLTLCCLLYF) form a helical membrane-spanning segment. Over 3439–3767 (CTKCHCFKGR…SQTSTHVTKK (329 aa)) the chain is Cytoplasmic. The interval 3582–3729 (TTTTDEQGNT…EEDVEHSVGD (148 aa)) is disordered. The segment covering 3588 to 3597 (QGNTIVTTTE) has biased composition (polar residues). Positions 3630–3665 (QSQSQQQQSMSQGMSQSMSQHATSAGYSSSGMESSA) are enriched in low complexity. Residues 3675 to 3684 (HTGERERGGS) show a composition bias toward basic and acidic residues. Low complexity predominate over residues 3690-3702 (IGRARGMAAASSG).

As to expression, expressed in the hypodermis at the sites of muscle contact, in striated muscles including body wall muscles, the anal sphincter muscles and the junctions between the anal sphincter muscle and rectal cuticle. Also expressed in non-muscle cells including the excretory duct cell and pore cells.

It is found in the cell membrane. Its subcellular location is the cell junction. It localises to the hemidesmosome. In terms of biological role, involved in cell adhesion and required for organ positioning and attachment. At the hypodermal surface, required for attachment of the hypdermermis to the basal cuticle in postembryonic development, possibly through intermediate filaments of the cytoskeleton. The polypeptide is Transmembrane cell adhesion receptor mua-3 (Caenorhabditis elegans).